A 921-amino-acid polypeptide reads, in one-letter code: Leucine--tRNA ligase (921 aa).

Positions 41-52 match the 'HIGH' region motif; that stretch reads PYPSGSGLHVGH. The short motif at 695 to 699 is the 'KMSKS' region element; it reads KMSKS. Position 698 (K698) interacts with ATP.

It belongs to the class-I aminoacyl-tRNA synthetase family.

It localises to the cytoplasm. It carries out the reaction tRNA(Leu) + L-leucine + ATP = L-leucyl-tRNA(Leu) + AMP + diphosphate. This chain is Leucine--tRNA ligase, found in Cytophaga hutchinsonii (strain ATCC 33406 / DSM 1761 / CIP 103989 / NBRC 15051 / NCIMB 9469 / D465).